A 265-amino-acid polypeptide reads, in one-letter code: Capsule polysaccharide export inner-membrane protein CtrC (265 aa).

The next 6 membrane-spanning stretches (helical) occupy residues 37 to 57, 64 to 84, 121 to 141, 147 to 167, 178 to 198, and 236 to 256; these read IGFL…VLMW, NVSA…MMMW, IAGA…IGWI, IFYM…LGLV, FGKV…VFFF, and NPWY…AVVA. Residues 37-258 form the ABC transmembrane type-2 domain; it reads IGFLWLFVEP…LLGLAVVARF (222 aa).

The protein belongs to the ABC-2 integral membrane protein family.

It localises to the cell inner membrane. Functionally, may form an ATP-driven capsule polysaccharide export apparatus, in association with the CtrB and CtrD proteins. This chain is Capsule polysaccharide export inner-membrane protein CtrC (ctrC), found in Neisseria meningitidis serogroup A / serotype 4A (strain DSM 15465 / Z2491).